A 753-amino-acid chain; its full sequence is Bifunctional terpene synthase FUP1 (753 aa).

The tract at residues 1 to 329 (MGPLLYRSRH…CSACPRQNAW (329 aa)) is terpene cyclase. Position 96 (Asp-96) interacts with Mg(2+). Positions 96–100 (DDTGE) match the DDXXD 1 motif. An NSE/DTE motif is present at residues 231-239 (NDYFSWERE). The tract at residues 330-745 (KNDTLSNGQN…MLRLCLAKLS (416 aa)) is prenyltransferase. Isopentenyl diphosphate is bound by residues Lys-461, Arg-464, and His-493. Mg(2+) is bound by residues Asp-500 and Asp-504. Positions 500 to 504 (DDLED) match the DDXXD 2 motif. Arg-509 is a binding site for dimethylallyl diphosphate. Arg-510 contacts isopentenyl diphosphate. Dimethylallyl diphosphate contacts are provided by Lys-587, Thr-588, Gln-625, Asn-632, Lys-640, and Lys-650.

In the N-terminal section; belongs to the terpene synthase family. This sequence in the C-terminal section; belongs to the FPP/GGPP synthase family. In terms of assembly, hexamer. Mg(2+) is required as a cofactor.

It carries out the reaction isopentenyl diphosphate + (2E,6E)-farnesyl diphosphate = (2E,6E,10E)-geranylgeranyl diphosphate + diphosphate. It functions in the pathway secondary metabolite biosynthesis; terpenoid biosynthesis. Its function is as follows. Bifunctional terpene synthase; part of the gene cluster that mediates the biosynthesis of the mycotoxin fusaproliferin (FUP) that belongs to the class of bicyclic sesterterpenoids. The FUP biosynthetic pathway starts with the enzyme encoded by FUP1 that combines a C-terminal prenyltransferase domain responsible for the synthesis of geranylgeranyl diphosphate with the N-terminal terpene cyclase domain, to yield preterpestacin I. Preterpestacin I is then decorated by oxygenation steps that are catalyzed by two cytochrome P450 monooxygenases. First, FUP2 introduces a hydroxyl group at the C-24 position resulting in the formation of preterpestacin IIa, which can be further oxidized. The second P450 monooxygenase catalyzes the hydroxylation at C-16 and C-17 of preterpestacin IIa, producing preterpestacin III. Subsequently, the FAD-dependent oxidoreductase FUP4 catalyzes the oxidation of the hydroxy group at the C-16 position to a keto group, leading to the formation of (-)-terpestacin, which is the immediate precursor of FUP. The final step in the proposed biosynthetic pathway is the addition of an acetyl group at the C-24 position of terpestacin, which is catalyzed by the acetyltransferase FUP5. This Fusarium proliferatum (strain ET1) (Orchid endophyte fungus) protein is Bifunctional terpene synthase FUP1.